The sequence spans 396 residues: ATP phosphoribosyltransferase regulatory subunit (396 aa).

It belongs to the class-II aminoacyl-tRNA synthetase family. HisZ subfamily. As to quaternary structure, heteromultimer composed of HisG and HisZ subunits.

The protein localises to the cytoplasm. It participates in amino-acid biosynthesis; L-histidine biosynthesis; L-histidine from 5-phospho-alpha-D-ribose 1-diphosphate: step 1/9. Required for the first step of histidine biosynthesis. May allow the feedback regulation of ATP phosphoribosyltransferase activity by histidine. The chain is ATP phosphoribosyltransferase regulatory subunit from Alkaliphilus metalliredigens (strain QYMF).